The primary structure comprises 205 residues: Probable NAD(P)H dehydrogenase (quinone) FQR1-like 1 (205 aa).

One can recognise a Flavodoxin-like domain in the interval 5–192; the sequence is VYIVYYSMYG…GQAFHQGKYI (188 aa). FMN contacts are provided by residues 11–15, 112–165, and histidine 136; these read SMYGH and IFYS…SPYG. NAD(+) is bound at residue tyrosine 13.

This sequence belongs to the WrbA family. FMN is required as a cofactor.

It is found in the cell membrane. The enzyme catalyses a quinone + NADH + H(+) = a quinol + NAD(+). It carries out the reaction a quinone + NADPH + H(+) = a quinol + NADP(+). Its function is as follows. Catalyzes the transfer of electrons from NADH and NADPH to reduce quinone to the hydroquinone state. The protein is Probable NAD(P)H dehydrogenase (quinone) FQR1-like 1 of Arabidopsis thaliana (Mouse-ear cress).